The sequence spans 363 residues: uncharacterized protein (363 aa).

Residues 1–20 (MKRAPLITGLLLISTSCAYA) form the signal peptide.

This sequence belongs to the fimbrial protein family.

The protein localises to the fimbrium. In terms of biological role, part of the yraHIJK fimbrial operon. Could contribute to adhesion to various surfaces in specific environmental niches. Increases adhesion to eukaryotic T24 bladder epithelial cells in the absence of fim operon. This is an uncharacterized protein from Escherichia coli (strain K12).